A 240-amino-acid chain; its full sequence is EF-hand domain-containing protein D2 (240 aa).

N-acetylalanine is present on A2. Phosphoserine is present on S11. Residues 13 to 38 are disordered; that stretch reads RLQMEGEGGGETPEQPGLNGAAAAAA. Residues S74 and S76 each carry the phosphoserine modification. Y83 is modified (phosphotyrosine). EF-hand domains lie at 92–127 and 128–163; these read KQIK…LGAP and QTHL…AAAG. Residues D105, D109, E116, D141, D143, D145, K147, and E152 each coordinate Ca(2+). N6-acetyllysine is present on K233.

In terms of assembly, interacts with CASP9; with inactive form. As to expression, found in lymphocytes; preferentially expressed in CD8+ cells.

The protein localises to the membrane raft. Its function is as follows. May regulate B-cell receptor (BCR)-induced immature and primary B-cell apoptosis. Plays a role as negative regulator of the canonical NF-kappa-B-activating branch. Controls spontaneous apoptosis through the regulation of BCL2L1 abundance. The polypeptide is EF-hand domain-containing protein D2 (EFHD2) (Homo sapiens (Human)).